A 240-amino-acid chain; its full sequence is Flagellar L-ring protein (240 aa).

The N-terminal stretch at 1 to 20 (MIRNFLLFFMPIYAILFLSG) is a signal peptide. C21 carries the N-palmitoyl cysteine lipid modification. C21 carries the S-diacylglycerol cysteine lipid modification.

It belongs to the FlgH family. The basal body constitutes a major portion of the flagellar organelle and consists of four rings (L,P,S, and M) mounted on a central rod.

It localises to the cell outer membrane. The protein localises to the bacterial flagellum basal body. In terms of biological role, assembles around the rod to form the L-ring and probably protects the motor/basal body from shearing forces during rotation. The polypeptide is Flagellar L-ring protein (Sulfurimonas denitrificans (strain ATCC 33889 / DSM 1251) (Thiomicrospira denitrificans (strain ATCC 33889 / DSM 1251))).